The primary structure comprises 301 residues: Homoserine O-acetyltransferase (301 aa).

C142 functions as the Acyl-thioester intermediate in the catalytic mechanism. Substrate-binding residues include K163 and S192. The active-site Proton acceptor is H235. E237 is a catalytic residue. R249 lines the substrate pocket.

This sequence belongs to the MetA family. In terms of assembly, homodimer.

It is found in the cytoplasm. It carries out the reaction L-homoserine + acetyl-CoA = O-acetyl-L-homoserine + CoA. It functions in the pathway amino-acid biosynthesis; L-methionine biosynthesis via de novo pathway; O-acetyl-L-homoserine from L-homoserine: step 1/1. In terms of biological role, transfers an acetyl group from acetyl-CoA to L-homoserine, forming acetyl-L-homoserine. Utilizes a ping-pong kinetic mechanism in which the acetyl group of acetyl-CoA is initially transferred to the enzyme to form an acetyl-enzyme intermediate before subsequent transfer to homoserine to form the final product, O-acetylhomoserine. Cannot use succinyl-CoA as the acyl donor. In Bacillus cereus (strain ATCC 10987 / NRS 248), this protein is Homoserine O-acetyltransferase.